We begin with the raw amino-acid sequence, 246 residues long: Small ribosomal subunit protein uS2 (246 aa).

This sequence belongs to the universal ribosomal protein uS2 family.

The sequence is that of Small ribosomal subunit protein uS2 from Stutzerimonas stutzeri (strain A1501) (Pseudomonas stutzeri).